The sequence spans 89 residues: HssA/B-like protein 16 (89 aa).

It belongs to the hssA/B family.

The polypeptide is HssA/B-like protein 16 (hssl16) (Dictyostelium discoideum (Social amoeba)).